The primary structure comprises 309 residues: Probable manganese-dependent inorganic pyrophosphatase (309 aa).

Residues histidine 9, aspartate 13, aspartate 15, aspartate 75, histidine 97, and aspartate 149 each contribute to the Mn(2+) site.

It belongs to the PPase class C family. Mn(2+) serves as cofactor.

It localises to the cytoplasm. The catalysed reaction is diphosphate + H2O = 2 phosphate + H(+). The polypeptide is Probable manganese-dependent inorganic pyrophosphatase (Bacillus mycoides (strain KBAB4) (Bacillus weihenstephanensis)).